Here is a 540-residue protein sequence, read N- to C-terminus: Membrane protein insertase YidC (540 aa).

5 consecutive transmembrane segments (helical) span residues 7–27 (LLVL…QMDY), 345–365 (IVSN…GILY), 415–435 (LGGC…YWTF), 453–473 (LSAQ…MFLL), and 494–514 (PLIF…YWLV).

It belongs to the OXA1/ALB3/YidC family. Type 1 subfamily. Interacts with the Sec translocase complex via SecD. Specifically interacts with transmembrane segments of nascent integral membrane proteins during membrane integration.

The protein resides in the cell inner membrane. Its function is as follows. Required for the insertion and/or proper folding and/or complex formation of integral membrane proteins into the membrane. Involved in integration of membrane proteins that insert both dependently and independently of the Sec translocase complex, as well as at least some lipoproteins. Aids folding of multispanning membrane proteins. The protein is Membrane protein insertase YidC of Mannheimia succiniciproducens (strain KCTC 0769BP / MBEL55E).